Here is a 109-residue protein sequence, read N- to C-terminus: Iron-sulfur cluster assembly protein CyaY (109 aa).

Belongs to the frataxin family.

Involved in iron-sulfur (Fe-S) cluster assembly. May act as a regulator of Fe-S biogenesis. The protein is Iron-sulfur cluster assembly protein CyaY of Shewanella putrefaciens (strain CN-32 / ATCC BAA-453).